Here is a 166-residue protein sequence, read N- to C-terminus: NADH-quinone oxidoreductase subunit A (166 aa).

A run of 3 helical transmembrane segments spans residues 16–36 (FAVF…GAYF), 68–88 (FYLV…LYAW), and 98–118 (IGFI…FYLV). Residues 141-166 (RYASSHPQDISQELSVAGSQQANESR) are disordered.

It belongs to the complex I subunit 3 family. NDH-1 is composed of 13 different subunits. Subunits NuoA, H, J, K, L, M, N constitute the membrane sector of the complex.

The protein localises to the cell inner membrane. The enzyme catalyses a quinone + NADH + 5 H(+)(in) = a quinol + NAD(+) + 4 H(+)(out). NDH-1 shuttles electrons from NADH, via FMN and iron-sulfur (Fe-S) centers, to quinones in the respiratory chain. The immediate electron acceptor for the enzyme in this species is believed to be ubiquinone. Couples the redox reaction to proton translocation (for every two electrons transferred, four hydrogen ions are translocated across the cytoplasmic membrane), and thus conserves the redox energy in a proton gradient. This is NADH-quinone oxidoreductase subunit A from Yersinia pseudotuberculosis serotype O:1b (strain IP 31758).